The sequence spans 412 residues: Argininosuccinate synthase (412 aa).

ATP is bound by residues 10 to 18 (AYSGGLDTS) and Ala36. 2 residues coordinate L-citrulline: Tyr87 and Ser92. Tyr87 is subject to Phosphotyrosine. Lys112 is modified (N6-acetyllysine). The residue at position 113 (Tyr113) is a Phosphotyrosine. Position 115–123 (115–123 (SHGATGKGN)) interacts with ATP. The L-aspartate site is built by Thr119, Asn123, and Asp124. Residue Asn123 coordinates L-citrulline. Arg127 contacts L-citrulline. N6-acetyllysine; by CLOCK occurs at positions 165 and 176. L-citrulline contacts are provided by Ser180 and Ser189. Ser180 carries the phosphoserine modification. At Thr219 the chain carries Phosphothreonine. The L-citrulline site is built by Glu270 and Tyr282.

This sequence belongs to the argininosuccinate synthase family. Type 1 subfamily. As to quaternary structure, homotetramer. Interacts with NMRAL1. Interacts with CLOCK; in a circadian manner. Forms tissue-specific complexes with ASL, SLC7A1, HSP90AA1 and nitric oxide synthase NOS1, NOS2 or NOS3; the complex regulates cell-autonomous L-arginine synthesis and citrulline recycling while channeling extracellular L-arginine to nitric oxide synthesis pathway. Acetylated by CLOCK in a circadian manner which negatively regulates its enzyme activity. Deacetylated by histone deacetylases. As to expression, expressed in adult liver.

The protein resides in the cytoplasm. The protein localises to the cytosol. It catalyses the reaction L-citrulline + L-aspartate + ATP = 2-(N(omega)-L-arginino)succinate + AMP + diphosphate + H(+). It participates in amino-acid biosynthesis; L-arginine biosynthesis; L-arginine from L-ornithine and carbamoyl phosphate: step 2/3. It functions in the pathway nitrogen metabolism; urea cycle; (N(omega)-L-arginino)succinate from L-aspartate and L-citrulline: step 1/1. Its function is as follows. One of the enzymes of the urea cycle, the metabolic pathway transforming neurotoxic amonia produced by protein catabolism into inocuous urea in the liver of ureotelic animals. Catalyzes the formation of arginosuccinate from aspartate, citrulline and ATP and together with ASL it is responsible for the biosynthesis of arginine in most body tissues. The sequence is that of Argininosuccinate synthase from Homo sapiens (Human).